The chain runs to 122 residues: UPF0102 protein VCM66_0538 (122 aa).

The protein belongs to the UPF0102 family.

This chain is UPF0102 protein VCM66_0538, found in Vibrio cholerae serotype O1 (strain M66-2).